We begin with the raw amino-acid sequence, 308 residues long: Aspartate carbamoyltransferase catalytic subunit (308 aa).

2 residues coordinate carbamoyl phosphate: Arg59 and Thr60. Lys87 lines the L-aspartate pocket. Positions 109, 137, and 140 each coordinate carbamoyl phosphate. The L-aspartate site is built by Arg173 and Arg224. Residues Gly267 and Pro268 each contribute to the carbamoyl phosphate site.

Belongs to the aspartate/ornithine carbamoyltransferase superfamily. ATCase family. In terms of assembly, heterododecamer (2C3:3R2) of six catalytic PyrB chains organized as two trimers (C3), and six regulatory PyrI chains organized as three dimers (R2).

The enzyme catalyses carbamoyl phosphate + L-aspartate = N-carbamoyl-L-aspartate + phosphate + H(+). The protein operates within pyrimidine metabolism; UMP biosynthesis via de novo pathway; (S)-dihydroorotate from bicarbonate: step 2/3. Catalyzes the condensation of carbamoyl phosphate and aspartate to form carbamoyl aspartate and inorganic phosphate, the committed step in the de novo pyrimidine nucleotide biosynthesis pathway. In Helicobacter acinonychis (strain Sheeba), this protein is Aspartate carbamoyltransferase catalytic subunit.